Consider the following 351-residue polypeptide: Biotin synthase (351 aa).

In terms of domain architecture, Radical SAM core spans 44–262 (NRVQVSTLLS…LAVARILMPQ (219 aa)). Residues C59, C63, and C66 each coordinate [4Fe-4S] cluster. [2Fe-2S] cluster-binding residues include C103, C134, C194, and R266.

This sequence belongs to the radical SAM superfamily. Biotin synthase family. Homodimer. The cofactor is [4Fe-4S] cluster. Requires [2Fe-2S] cluster as cofactor.

The enzyme catalyses (4R,5S)-dethiobiotin + (sulfur carrier)-SH + 2 reduced [2Fe-2S]-[ferredoxin] + 2 S-adenosyl-L-methionine = (sulfur carrier)-H + biotin + 2 5'-deoxyadenosine + 2 L-methionine + 2 oxidized [2Fe-2S]-[ferredoxin]. It functions in the pathway cofactor biosynthesis; biotin biosynthesis; biotin from 7,8-diaminononanoate: step 2/2. Its function is as follows. Catalyzes the conversion of dethiobiotin (DTB) to biotin by the insertion of a sulfur atom into dethiobiotin via a radical-based mechanism. This Pseudomonas fluorescens (strain Pf0-1) protein is Biotin synthase.